The chain runs to 326 residues: UDP-3-O-acylglucosamine N-acyltransferase (326 aa).

His-225 functions as the Proton acceptor in the catalytic mechanism.

Belongs to the transferase hexapeptide repeat family. LpxD subfamily. As to quaternary structure, homotrimer.

The enzyme catalyses a UDP-3-O-[(3R)-3-hydroxyacyl]-alpha-D-glucosamine + a (3R)-hydroxyacyl-[ACP] = a UDP-2-N,3-O-bis[(3R)-3-hydroxyacyl]-alpha-D-glucosamine + holo-[ACP] + H(+). The protein operates within bacterial outer membrane biogenesis; LPS lipid A biosynthesis. In terms of biological role, catalyzes the N-acylation of UDP-3-O-acylglucosamine using 3-hydroxyacyl-ACP as the acyl donor. Is involved in the biosynthesis of lipid A, a phosphorylated glycolipid that anchors the lipopolysaccharide to the outer membrane of the cell. This chain is UDP-3-O-acylglucosamine N-acyltransferase, found in Verminephrobacter eiseniae (strain EF01-2).